The following is a 122-amino-acid chain: Large ribosomal subunit protein uL14 (122 aa).

This sequence belongs to the universal ribosomal protein uL14 family. As to quaternary structure, part of the 50S ribosomal subunit. Forms a cluster with proteins L3 and L19. In the 70S ribosome, L14 and L19 interact and together make contacts with the 16S rRNA in bridges B5 and B8.

Binds to 23S rRNA. Forms part of two intersubunit bridges in the 70S ribosome. This Cytophaga hutchinsonii (strain ATCC 33406 / DSM 1761 / CIP 103989 / NBRC 15051 / NCIMB 9469 / D465) protein is Large ribosomal subunit protein uL14.